Consider the following 79-residue polypeptide: Sec-independent protein translocase protein TatA (79 aa).

The helical transmembrane segment at 1 to 21 (MGGISIWQLLIILVIVVLLFG) threads the bilayer. Residues 45-79 (EEEKDADFEQKKQVEEKSAAEPVSTETQSDVKEKS) are disordered. Residues 51–63 (DFEQKKQVEEKSA) are compositionally biased toward basic and acidic residues.

It belongs to the TatA/E family. The Tat system comprises two distinct complexes: a TatABC complex, containing multiple copies of TatA, TatB and TatC subunits, and a separate TatA complex, containing only TatA subunits. Substrates initially bind to the TatABC complex, which probably triggers association of the separate TatA complex to form the active translocon.

The protein localises to the cell inner membrane. Part of the twin-arginine translocation (Tat) system that transports large folded proteins containing a characteristic twin-arginine motif in their signal peptide across membranes. TatA could form the protein-conducting channel of the Tat system. The polypeptide is Sec-independent protein translocase protein TatA (Alteromonas mediterranea (strain DSM 17117 / CIP 110805 / LMG 28347 / Deep ecotype)).